The chain runs to 20 residues: Fibrinogen beta chain (20 aa).

Residues 1-12 are compositionally biased toward acidic residues; that stretch reads IIDYYDEGEEDR. The segment at 1 to 20 is disordered; that stretch reads IIDYYDEGEEDRDVGVVDAR.

As to quaternary structure, heterohexamer; disulfide linked. Contains 2 sets of 3 non-identical chains (alpha, beta and gamma). The 2 heterotrimers are in head to head conformation with the N-termini in a small central domain. Conversion of fibrinogen to fibrin is triggered by thrombin, which cleaves fibrinopeptides A and B from alpha and beta chains, and thus exposes the N-terminal polymerization sites responsible for the formation of the soft clot.

Its subcellular location is the secreted. Cleaved by the protease thrombin to yield monomers which, together with fibrinogen alpha (FGA) and fibrinogen gamma (FGG), polymerize to form an insoluble fibrin matrix. Fibrin has a major function in hemostasis as one of the primary components of blood clots. In addition, functions during the early stages of wound repair to stabilize the lesion and guide cell migration during re-epithelialization. Was originally thought to be essential for platelet aggregation, based on in vitro studies using anticoagulated blood. However subsequent studies have shown that it is not absolutely required for thrombus formation in vivo. Enhances expression of SELP in activated platelets. Maternal fibrinogen is essential for successful pregnancy. Fibrin deposition is also associated with infection, where it protects against IFNG-mediated hemorrhage. May also facilitate the antibacterial immune response via both innate and T-cell mediated pathways. This is Fibrinogen beta chain (FGB) from Felis catus (Cat).